The primary structure comprises 1873 residues: Ankyrin repeat domain-containing protein 31 (1873 aa).

Disordered regions lie at residues 1–27 (MEEG…SDLE) and 361–380 (EPLS…DQET). Residues 361-379 (EPLSNKRNSNSVTNSSDQE) are compositionally biased toward polar residues. ANK repeat units lie at residues 488 to 517 (FGEN…NVNQ), 521 to 550 (AGWT…DVNI), and 554 to 583 (YQIT…DPLF). Residues 707–740 (TGLRKGNLHNVKDPNTNVPKGIGRRKTQHKRTQV) form a disordered region. Basic residues predominate over residues 728–737 (IGRRKTQHKR). ANK repeat units follow at residues 1154 to 1183 (RGES…DVNL), 1187 to 1216 (AGWT…KVNC), and 1220 to 1249 (DGIL…NPNQ). 4 disordered regions span residues 1242–1263 (QNGA…EADD), 1449–1482 (RSEI…SGSM), 1512–1549 (FSGN…PSQP), and 1606–1634 (CDQD…ASES). Basic and acidic residues predominate over residues 1250-1263 (KDQKQKSALDEADD). Polar residues-rich tracts occupy residues 1460 to 1482 (ELTS…SGSM) and 1515 to 1525 (NDMNSKQNGSD). Basic and acidic residues predominate over residues 1535 to 1544 (RHSDGTEKNK). The span at 1621–1632 (KTSSQQSPTGAS) shows a compositional bias: polar residues. The RAMA domain occupies 1683-1778 (KKALNYSTAP…TYLGKELLRY (96 aa)).

In terms of assembly, interacts with REC114; the interaction is direct. Interacts with IHO1.

Its subcellular location is the nucleus. It is found in the chromosome. Functionally, required for DNA double-strand breaks (DSBs) formation during meiotic recombination. Regulates the spatial and temporal patterns of pre-DSB recombinosome assembly and recombination activity by acting as a scaffold that anchors REC114 and other factors to specific genomic locations, thereby regulating DSB formation. Plays a key role in recombination in the pseudoautosomal regions of sex chromosomes. The protein is Ankyrin repeat domain-containing protein 31 of Homo sapiens (Human).